We begin with the raw amino-acid sequence, 1747 residues long: Retroelement silencing factor 1 (1747 aa).

A Glycyl lysine isopeptide (Lys-Gly) (interchain with G-Cter in SUMO2) cross-link involves residue K216. Position 221 is a phosphoserine (S221). The segment covering T261–Q272 has biased composition (polar residues). The segment at T261–P280 is disordered. A Glycyl lysine isopeptide (Lys-Gly) (interchain with G-Cter in SUMO2) cross-link involves residue K707. Disordered stretches follow at residues P833–Q856, P923–K956, and E1073–A1101. A compositionally biased stretch (polar residues) spans E842–Q856. Residues R937–K956 are compositionally biased toward basic and acidic residues. A compositionally biased stretch (polar residues) spans E1073–D1087. A compositionally biased stretch (basic and acidic residues) spans T1089–A1101. Residue K1136 forms a Glycyl lysine isopeptide (Lys-Gly) (interchain with G-Cter in SUMO2) linkage. The residue at position 1145 (S1145) is a Phosphoserine. The disordered stretch occupies residues E1200–L1274. Residues Q1217–V1226 are compositionally biased toward basic and acidic residues. T1240 bears the Phosphothreonine mark. Over residues P1242–K1261 the composition is skewed to basic and acidic residues. Position 1358 is a phosphoserine (S1358). Residues K1528 and K1636 each participate in a glycyl lysine isopeptide (Lys-Gly) (interchain with G-Cter in SUMO2) cross-link. Residues K1686 to Q1716 are disordered. Residues Q1689–V1698 show a composition bias toward basic and acidic residues. Residue S1708 is modified to Phosphoserine. K1723 participates in a covalent cross-link: Glycyl lysine isopeptide (Lys-Gly) (interchain with G-Cter in SUMO2). S1740 carries the phosphoserine modification.

Interacts with SETDB1.

Its subcellular location is the nucleus. Functionally, plays a role in the regulation of imprinted gene expression, regulates repressive epigenetic modifications associated with SETDB1. Required for the recruitment or accumulation of SETDB1 to the endogenous retroviruses (ERVs) and maintenance of repressive chromatin configuration, contributing to a subset of the SETDB1-dependent ERV silencing in embryonic stem cells. This is Retroelement silencing factor 1 from Homo sapiens (Human).